We begin with the raw amino-acid sequence, 398 residues long: Phosphoglycerate kinase (398 aa).

Residues aspartate 21–asparagine 23, arginine 36, histidine 59–arginine 62, arginine 119, and arginine 157 contribute to the substrate site. Residues lysine 208, glycine 296, glutamate 327, and glycine 354 to serine 357 contribute to the ATP site.

Belongs to the phosphoglycerate kinase family. In terms of assembly, monomer.

The protein localises to the cytoplasm. It catalyses the reaction (2R)-3-phosphoglycerate + ATP = (2R)-3-phospho-glyceroyl phosphate + ADP. The protein operates within carbohydrate degradation; glycolysis; pyruvate from D-glyceraldehyde 3-phosphate: step 2/5. The protein is Phosphoglycerate kinase of Streptococcus pneumoniae serotype 2 (strain D39 / NCTC 7466).